A 139-amino-acid polypeptide reads, in one-letter code: Putative pre-16S rRNA nuclease (139 aa).

This sequence belongs to the YqgF nuclease family.

It localises to the cytoplasm. In terms of biological role, could be a nuclease involved in processing of the 5'-end of pre-16S rRNA. The sequence is that of Putative pre-16S rRNA nuclease from Pectobacterium atrosepticum (strain SCRI 1043 / ATCC BAA-672) (Erwinia carotovora subsp. atroseptica).